A 584-amino-acid polypeptide reads, in one-letter code: DNA damage-binding protein 2 (584 aa).

The tract at residues methionine 1–arginine 87 is disordered. Positions arginine 8 to glycine 20 are enriched in basic residues. Acidic residues-rich tracts occupy residues proline 25–glutamine 35 and aspartate 45–alanine 66. The segment at lysine 122 to histidine 140 adopts a CCHC-type zinc-finger fold. WD repeat units lie at residues phenylalanine 192–threonine 232, valine 236–asparagine 278, serine 288–aspartate 327, lysine 333–alanine 373, alanine 378–proline 418, glutamate 438–valine 481, and proline 484–glutamate 523. Residues leucine 351–arginine 366 carry the DWD box motif. Basic and acidic residues predominate over residues threonine 517–glutamate 532. Positions threonine 517–valine 584 are disordered. The segment covering lysine 562–valine 584 has biased composition (basic residues).

The protein belongs to the WD repeat DDB2/WDR76 family. Component of the UV-DDB complex, which is composed of DDB1 and DDB2. As to expression, expressed in proliferating tissues such as shoot apical meristem (SAM), root tips and young leaves. Not detected in mature leaves.

Its subcellular location is the nucleus. Required for DNA repair. Binds to DDB1 to form the UV-damaged DNA-binding protein complex (the UV-DDB complex). The UV-DDB complex may recognize UV-induced DNA damage and recruit proteins of the nucleotide excision repair pathway (the NER pathway) to initiate DNA repair. May function as the substrate recognition module for a DCX (DDB1-CUL4-X-box) E3 ubiquitin-protein ligase complex. This is DNA damage-binding protein 2 from Oryza sativa subsp. japonica (Rice).